The chain runs to 305 residues: UDP-3-O-acyl-N-acetylglucosamine deacetylase (305 aa).

The Zn(2+) site is built by histidine 78, histidine 237, and aspartate 241. The active-site Proton donor is the histidine 264.

It belongs to the LpxC family. Requires Zn(2+) as cofactor.

It catalyses the reaction a UDP-3-O-[(3R)-3-hydroxyacyl]-N-acetyl-alpha-D-glucosamine + H2O = a UDP-3-O-[(3R)-3-hydroxyacyl]-alpha-D-glucosamine + acetate. It participates in glycolipid biosynthesis; lipid IV(A) biosynthesis; lipid IV(A) from (3R)-3-hydroxytetradecanoyl-[acyl-carrier-protein] and UDP-N-acetyl-alpha-D-glucosamine: step 2/6. Catalyzes the hydrolysis of UDP-3-O-myristoyl-N-acetylglucosamine to form UDP-3-O-myristoylglucosamine and acetate, the committed step in lipid A biosynthesis. This chain is UDP-3-O-acyl-N-acetylglucosamine deacetylase, found in Burkholderia cenocepacia (strain HI2424).